The following is a 914-amino-acid chain: TRPM8 channel-associated factor 3 (914 aa).

In terms of domain architecture, Peptidase M60 spans 533-832; it reads NSWVSTGLYL…TYLQLQEGFG (300 aa).

The protein belongs to the TCAF family.

May play a role in the regulation of the cation channel TRPM8 activity. This Rattus norvegicus (Rat) protein is TRPM8 channel-associated factor 3.